The following is an 874-amino-acid chain: Alanine--tRNA ligase (874 aa).

4 residues coordinate Zn(2+): His562, His566, Cys664, and His668.

This sequence belongs to the class-II aminoacyl-tRNA synthetase family. It depends on Zn(2+) as a cofactor.

The protein resides in the cytoplasm. The catalysed reaction is tRNA(Ala) + L-alanine + ATP = L-alanyl-tRNA(Ala) + AMP + diphosphate. Its function is as follows. Catalyzes the attachment of alanine to tRNA(Ala) in a two-step reaction: alanine is first activated by ATP to form Ala-AMP and then transferred to the acceptor end of tRNA(Ala). Also edits incorrectly charged Ser-tRNA(Ala) and Gly-tRNA(Ala) via its editing domain. In Shewanella putrefaciens (strain CN-32 / ATCC BAA-453), this protein is Alanine--tRNA ligase.